The following is a 475-amino-acid chain: Equilibrative nucleoside transporter 3 (475 aa).

The Cytoplasmic segment spans residues 1-51 (MAFASEDIAYHSSNAVYRVPSNRHEADQEALLGKPLDYPAPGLQRPEDRFN). Position 21 is a phosphoserine (Ser-21). Positions 31–32 (LL) match the Dileucine internalization motif motif. Residues 52-72 (GAYIIFFCLGIGGLLPWNFFV) form a helical membrane-spanning segment. Over 73-105 (TAKEYWAFKLRNCSSPASGKDPEDADILNYFES) the chain is Extracellular. N-linked (GlcNAc...) asparagine glycosylation is present at Asn-84. Residues 106-126 (YLAVASTVPSLLFLVANFLLV) traverse the membrane as a helical segment. Residues 127–132 (NRIRVH) lie on the Cytoplasmic side of the membrane. The chain crosses the membrane as a helical span at residues 133 to 153 (VRVLASLSVSLAIFVVMAVLV). Over 154–162 (RVDTSSWTR) the chain is Extracellular. The helical transmembrane segment at 163–183 (GFFSIAMACMAIISSSSTIFN) threads the bilayer. Residues 184-199 (SSVYGLTGSFPMRNAQ) are Cytoplasmic-facing. The helical transmembrane segment at 200-220 (ALISGGAMGGTVSAVASLVDL) threads the bilayer. The Extracellular portion of the chain corresponds to 221-230 (AASSDVRDSA). A helical transmembrane segment spans residues 231 to 251 (LAFFLTAAVFLGLCVGLYLLL). Topologically, residues 252 to 305 (PQLEYARYYMRPVVPIHVFSSEDSPPRDAPSTSSVAPASRAVHTPPLGPILKKT) are cytoplasmic. The interval 272 to 291 (SEDSPPRDAPSTSSVAPASR) is disordered. Residues 306 to 326 (AGLGFCAVFLYFITALIFPAI) form a helical membrane-spanning segment. The Extracellular segment spans residues 327-340 (STNIQPMHKGTGSP). The helical transmembrane segment at 341–361 (WTSKFYVPLTVFLLFNFADLC) threads the bilayer. At 362-377 (GRQVTAWIQVPGPRSK) the chain is on the cytoplasmic side. Residues 378 to 398 (LLPILAVSRVCLVPLFLLCNY) form a helical membrane-spanning segment. At 399 to 414 (QPRSHLTLVLFQSDIY) the chain is on the extracellular side. A helical membrane pass occupies residues 415–437 (PILFTCLLGLSNGYLSTLVLMYG). The Cytoplasmic portion of the chain corresponds to 438-450 (PKIVPRELAEATS). Residues 451–471 (VVMLFYMSLGLMLGSACAALL) form a helical membrane-spanning segment. The Extracellular segment spans residues 472-475 (EHFI).

The protein belongs to the SLC29A/ENT transporter (TC 2.A.57) family. Widely expressed. Highest levels in heart and liver (at protein level).

Its subcellular location is the lysosome membrane. It localises to the late endosome membrane. The protein localises to the mitochondrion membrane. It is found in the cell membrane. It catalyses the reaction adenosine(in) = adenosine(out). The enzyme catalyses guanosine(in) = guanosine(out). The catalysed reaction is inosine(in) = inosine(out). It carries out the reaction uridine(out) = uridine(in). It catalyses the reaction cytidine(in) = cytidine(out). The enzyme catalyses thymidine(in) = thymidine(out). The catalysed reaction is 2'-deoxyadenosine(in) = 2'-deoxyadenosine(out). It carries out the reaction 2'-deoxycytidine(in) = 2'-deoxycytidine(out). It catalyses the reaction guanine(out) = guanine(in). The enzyme catalyses uracil(in) = uracil(out). The catalysed reaction is (R)-noradrenaline(out) = (R)-noradrenaline(in). It carries out the reaction dopamine(out) = dopamine(in). It catalyses the reaction serotonin(out) = serotonin(in). The enzyme catalyses tyramine(in) = tyramine(out). The catalysed reaction is ATP(in) = ATP(out). Functionally, uniporter that mediates the facilitative transport of nucleoside across lysosomal and mitochondrial membranes. Functions as a non-electrogenic Na(+)-independent transporter. Substrate transport is pH-dependent and enhanced under acidic condition, probably reflecting the location of the transporter in acidic intracellular compartments. Proton is not a cotransporting ion but most likely change the ionization state of the transporter which dictates transport-permissible/impermissible conformation for nucleoside translocation. May direct the nucleoside transport from lysosomes to cytosol or cytosol to mitochondria to facilitate the fundamental function of salvage synthesis of nucleic acids. Involved in the transport of nucleosides (adenosine, guanosine, uridine, thymidine, cytidine and inosine) and deoxynucleosides (deoxyadenosine, deoxycytidine). Also mediates transport of purine nucleobases (adenine, guanine) and pyrimidine nucleobases (uracil). Also able to transport monoamine neurotransmitters dopamine, serotonin, noradrenaline and tyramine. Capable of transporting ATP. Mediates nucleoside export from lysosomes in macrophages, which regulates macrophage functions and numbers. This Rattus norvegicus (Rat) protein is Equilibrative nucleoside transporter 3.